Reading from the N-terminus, the 188-residue chain is F-box only protein 36 (188 aa).

Positions 91–137 (FDYLERLSDRLLLKIICYLDLEDIASLSQTSSKFEKLCKSDLLWEQI) constitute an F-box domain.

As to quaternary structure, directly interacts with SKP1 and CUL1.

Functionally, substrate-recognition component of the SCF (SKP1-CUL1-F-box protein)-type E3 ubiquitin ligase complex. The polypeptide is F-box only protein 36 (Fbxo36) (Mus musculus (Mouse)).